The sequence spans 1295 residues: DNA (cytosine-5)-methyltransferase CMT2 (1295 aa).

Disordered regions lie at residues 1–23 (MLSP…SSSR), 61–91 (RRST…GKSQ), and 249–287 (NSSK…GKGM). Over residues 61–72 (RRSTTLNCNSPE) the composition is skewed to polar residues. Residues 578 to 693 (HTFSLGDFAY…VEYSTFQTLR (116 aa)) enclose the BAH domain. Residues 727 to 1268 (LPVLDLYSGC…YSLGMAFRGL (542 aa)) enclose the SAM-dependent MTase C5-type domain. Residues 814–835 (SVNSTKETSGSSSSSDDDSDSE) are disordered. The 66-residue stretch at 837–902 (YEVEKLVDIC…SGFKSKILPL (66 aa)) folds into the Chromo domain. C915 is an active-site residue.

It belongs to the class I-like SAM-binding methyltransferase superfamily. C5-methyltransferase family.

Its subcellular location is the nucleus. It carries out the reaction a 2'-deoxycytidine in DNA + S-adenosyl-L-methionine = a 5-methyl-2'-deoxycytidine in DNA + S-adenosyl-L-homocysteine + H(+). Functionally, may be involved in the CpXpG methylation and in gene silencing. The protein is DNA (cytosine-5)-methyltransferase CMT2 (CMT2) of Arabidopsis thaliana (Mouse-ear cress).